A 210-amino-acid polypeptide reads, in one-letter code: MDLHNIREDYSKRELSEGDCADNPIEQFERWLDEAVRAQVNEPTAVNVAAVDGRGRPNSRMVLLKEVNSEGFVFFTNYHSRKGRSLDAHPFAAMTFFWPELERQVRVEGRVERLAEKLSDEYFESRPYQSRLGAWASAQSEVIPNKAVLVAKAAAVGLKHPLHVPRPPHWGGYIVIPDLIEFWQGRPSRLHDRIQYRLLDGGWIRERLSP.

Substrate is bound by residues 7–10 and Lys-65; that span reads REDY. Residues 60–65, 75–76, Arg-81, Lys-82, and Gln-104 contribute to the FMN site; these read RMVLLK and FT. Tyr-122, Arg-126, and Ser-130 together coordinate substrate. FMN-binding positions include 139–140 and Trp-183; that span reads QS. 189 to 191 lines the substrate pocket; the sequence is RLH. FMN is bound at residue Arg-193.

This sequence belongs to the pyridoxamine 5'-phosphate oxidase family. As to quaternary structure, homodimer. It depends on FMN as a cofactor.

The enzyme catalyses pyridoxamine 5'-phosphate + O2 + H2O = pyridoxal 5'-phosphate + H2O2 + NH4(+). It carries out the reaction pyridoxine 5'-phosphate + O2 = pyridoxal 5'-phosphate + H2O2. It participates in cofactor metabolism; pyridoxal 5'-phosphate salvage; pyridoxal 5'-phosphate from pyridoxamine 5'-phosphate: step 1/1. The protein operates within cofactor metabolism; pyridoxal 5'-phosphate salvage; pyridoxal 5'-phosphate from pyridoxine 5'-phosphate: step 1/1. Catalyzes the oxidation of either pyridoxine 5'-phosphate (PNP) or pyridoxamine 5'-phosphate (PMP) into pyridoxal 5'-phosphate (PLP). This is Pyridoxine/pyridoxamine 5'-phosphate oxidase from Neisseria meningitidis serogroup A / serotype 4A (strain DSM 15465 / Z2491).